The sequence spans 233 residues: Endonuclease V (233 aa).

Asp-48 and Asp-116 together coordinate Mg(2+).

This sequence belongs to the endonuclease V family. Mg(2+) is required as a cofactor.

It localises to the cytoplasm. The enzyme catalyses Endonucleolytic cleavage at apurinic or apyrimidinic sites to products with a 5'-phosphate.. In terms of biological role, DNA repair enzyme involved in the repair of deaminated bases. Selectively cleaves double-stranded DNA at the second phosphodiester bond 3' to a deoxyinosine leaving behind the intact lesion on the nicked DNA. The polypeptide is Endonuclease V (Streptomyces coelicolor (strain ATCC BAA-471 / A3(2) / M145)).